A 1081-amino-acid polypeptide reads, in one-letter code: Importin-4 (1081 aa).

An N-acetylmethionine modification is found at Met-1. Residues 24 to 90 enclose the Importin N-terminal domain; it reads ATEQLQIVLR…KSLILTALQR (67 aa). HEAT repeat units lie at residues 348 to 385, 390 to 427, 431 to 471, 475 to 513, 895 to 932, and 936 to 974; these read KLCP…GAGD, RLLP…NLQP, SYSR…NLGP, PYLP…AAQA, QFVS…HGGH, and EHFP…ASPT.

Belongs to the importin beta family. Found in a cytosolic complex with ASF1 (ASF1A or ASF1B) and histones H3 and H4.

The protein localises to the cytoplasm. It is found in the nucleus. In terms of biological role, nuclear transport receptor that mediates nuclear import of proteins, such as histones, RPS3A, TNP2 and VDR. Serves as receptor for nuclear localization signals (NLS) in cargo substrates. Is thought to mediate docking of the importin/substrate complex to the nuclear pore complex (NPC) through binding to nucleoporin and the complex is subsequently translocated through the pore by an energy requiring, Ran-dependent mechanism. At the nucleoplasmic side of the NPC, Ran binds to the importin, the importin/substrate complex dissociates and importin is re-exported from the nucleus to the cytoplasm where GTP hydrolysis releases Ran. The directionality of nuclear import is thought to be conferred by an asymmetric distribution of the GTP- and GDP-bound forms of Ran between the cytoplasm and nucleus. Mediates the nuclear import of the histone H3-H4 dimer when in complex with ASF1 (ASF1A or ASF1B). Mediates the ligand-independent nuclear import of vitamin D receptor (VDR). In vitro, mediates the nuclear import of human cytomegalovirus UL84 by recognizing a non-classical NLS. In Homo sapiens (Human), this protein is Importin-4 (IPO4).